Consider the following 489-residue polypeptide: Putative general secretion pathway protein A (489 aa).

An ATP-binding site is contributed by 26-33; that stretch reads GEAGSGKT. Residues 237-257 traverse the membrane as a helical segment; that stretch reads MQLAVVMSGTIIALTCGWLLL.

It belongs to the ExeA family.

The protein resides in the cell membrane. Its function is as follows. May play a regulatory role under conditions of derepressed gsp gene expression. The polypeptide is Putative general secretion pathway protein A (gspA) (Escherichia coli (strain K12)).